Reading from the N-terminus, the 596-residue chain is Protein Malvolio (596 aa).

The disordered stretch occupies residues 1 to 34 (MSSNEAYHEPGAGGDGPGGSSGASGGGSQRSNQL). Positions 11-28 (GAGGDGPGGSSGASGGGS) are enriched in gly residues. Asn-41 is a glycosylation site (N-linked (GlcNAc...) asparagine). A run of 7 helical transmembrane segments spans residues 77–97 (LWAF…PGNI), 105–125 (AAAK…GLLM), 154–174 (WILW…EVIG), 186–206 (VVPL…FLFL), 216–236 (FLFG…YIVS), 263–283 (AVGV…SALV), and 309–329 (VALF…AHGM). The N-linked (GlcNAc...) asparagine glycan is linked to Asn-359. The next 5 helical transmembrane spans lie at 373-393 (LFLG…GILA), 424-444 (VLVT…FSKM), 463-483 (PFAA…GEFV), 490-510 (IVSI…VVVQ), and 520-540 (LLAL…YLVI). Asn-574 is a glycosylation site (N-linked (GlcNAc...) asparagine).

The protein belongs to the NRAMP family. As to expression, expressed in macrophages and in the nervous system.

Its subcellular location is the membrane. Its function is as follows. Putative transporter required for normal taste behavior. May be a nitrite/nitrate transporter. The sequence is that of Protein Malvolio (Mvl) from Drosophila melanogaster (Fruit fly).